A 538-amino-acid chain; its full sequence is Transmembrane protein 266 (538 aa).

At 1 to 102 the chain is on the cytoplasmic side; that stretch reads MALVTSFNMA…VFLLSASLNS (102 aa). Residues 103–123 form a helical membrane-spanning segment; the sequence is FLVACVILVVILLTLELLIDT. Topologically, residues 124 to 130 are extracellular; the sequence is KLLQFSN. The helical transmembrane segment at 131 to 151 threads the bilayer; sequence AFQFAGVIHWISLVILSVFFS. The Cytoplasmic portion of the chain corresponds to 152 to 169; sequence ETVLRIVVLGIWDYIENK. Residues 170 to 190 traverse the membrane as a helical segment; that stretch reads IEVFDGAVIILSLAPMVASTV. Topologically, residues 191-199 are extracellular; it reads ANGPRSPWD. A helical transmembrane segment spans residues 200–220; that stretch reads AISLIIMFRIWRVKRVIDAYV. The Cytoplasmic portion of the chain corresponds to 221 to 538; it reads LPVKLEMEMV…EPKLHTVPEA (318 aa). The stretch at 232–278 forms a coiled coil; that stretch reads QQYEKAKAIQDEQLERLTQICQEQGFEIRQLRAHLAQQDLDLAAERE. 2 disordered regions span residues 380-435 and 453-483; these read NSTC…PLPL and SSLS…VQTS. The segment covering 381-396 has biased composition (low complexity); that stretch reads STCASATSETTSHSTC. Over residues 397–417 the composition is skewed to polar residues; the sequence is GSVTRAQSASSQTLGSSTDCS. The segment covering 425 to 434 has biased composition (low complexity); that stretch reads PSKPRSSPLP.

Homodimer; disulfide-linked. In terms of tissue distribution, in brain, present in the granule layer of the cerebellar cortex. Localizes on the post-synaptic side of glutamatergic mossy fibers and granule cells in the cerebellum (at protein level). As to expression, predominantly expressed in granule cells in cerebellum (at protein level).

The protein localises to the cell projection. It localises to the dendrite. Its subcellular location is the perikaryon. It is found in the cell membrane. Its function is as follows. Voltage-sensor protein present on the post-synaptic side of glutamatergic mossy fibers and granule cells in the cerebellum. Despite the presence of a voltage-sensor segment, does not form a functional ion channel and its precise role remains unclear. Undergoes both rapid and slow structural rearrangements in response to changes in voltage. Contains a zinc-binding site that can regulate the slow conformational transition. This chain is Transmembrane protein 266, found in Mus musculus (Mouse).